A 99-amino-acid chain; its full sequence is MSSNEKIFSVLRAPRVSEKTARLQEISNQYVFEVSNEATKADVKAAVEQLFDVKVKAVNVVNVKGKSKSFRNRAGSRGNWRKAYVRLVDGQSIDVTAKA.

The protein belongs to the universal ribosomal protein uL23 family. In terms of assembly, part of the 50S ribosomal subunit. Contacts protein L29, and trigger factor when it is bound to the ribosome.

Functionally, one of the early assembly proteins it binds 23S rRNA. One of the proteins that surrounds the polypeptide exit tunnel on the outside of the ribosome. Forms the main docking site for trigger factor binding to the ribosome. This is Large ribosomal subunit protein uL23 from Xanthomonas campestris pv. campestris (strain B100).